The chain runs to 275 residues: Octanoyl-[GcvH]:protein N-octanoyltransferase (275 aa).

One can recognise a BPL/LPL catalytic domain in the interval 42-246 (GQSQPVVRLW…ALQAFGSRLE (205 aa)). The active-site Acyl-thioester intermediate is cysteine 145.

Belongs to the octanoyltransferase LipL family.

It carries out the reaction N(6)-octanoyl-L-lysyl-[glycine-cleavage complex H protein] + L-lysyl-[lipoyl-carrier protein] = N(6)-octanoyl-L-lysyl-[lipoyl-carrier protein] + L-lysyl-[glycine-cleavage complex H protein]. It functions in the pathway protein modification; protein lipoylation via endogenous pathway; protein N(6)-(lipoyl)lysine from octanoyl-[acyl-carrier-protein]. Catalyzes the amidotransfer (transamidation) of the octanoyl moiety from octanoyl-GcvH to the lipoyl domain of the E2 subunit of lipoate-dependent enzymes. This Anoxybacillus flavithermus (strain DSM 21510 / WK1) protein is Octanoyl-[GcvH]:protein N-octanoyltransferase.